The sequence spans 363 residues: Somatostatin receptor type 5 (363 aa).

The Extracellular portion of the chain corresponds to 1–35; the sequence is MEPLSLASTPSWNASAASSGNHNWSLVGSASPMGA. N-linked (GlcNAc...) asparagine glycosylation is found at Asn-13 and Asn-23. The helical transmembrane segment at 36 to 63 threads the bilayer; it reads RAVLVPVLYLLVCTVGLSGNTLVIYVVL. The Cytoplasmic segment spans residues 64–73; the sequence is RHAKMKTVTN. A helical transmembrane segment spans residues 74–99; that stretch reads VYILNLAVADVLFMLGLPFLATQNAV. The Extracellular segment spans residues 100-111; that stretch reads VSYWPFGSFLCR. Cys-110 and Cys-185 are oxidised to a cystine. A helical membrane pass occupies residues 112–133; the sequence is LVMTLDGINQFTSIFCLMVMSV. At 134–155 the chain is on the cytoplasmic side; the sequence is DRYLAVVHPLRSARWRRPRVAK. The helical transmembrane segment at 156–176 threads the bilayer; sequence MASAAVWVFSLLMSLPLLVFA. Residues 177-196 lie on the Extracellular side of the membrane; the sequence is DVQEGWGTCNLSWPEPVGLW. The N-linked (GlcNAc...) asparagine glycan is linked to Asn-186. A helical transmembrane segment spans residues 197–221; it reads GAAFITYTSVLGFFGPLLVICLCYL. Residues 222 to 247 lie on the Cytoplasmic side of the membrane; the sequence is LIVVKVKAAGMRVGSSRRRRSEPKVT. The helical transmembrane segment at 248 to 273 threads the bilayer; that stretch reads RMVVVVVLVFVGCWLPFFIVNIVNLA. The Extracellular portion of the chain corresponds to 274–283; it reads FTLPEEPTSA. The helical transmembrane segment at 284–308 threads the bilayer; that stretch reads GLYFFVVVLSYANSCANPLLYGFLS. At 309–363 the chain is on the cytoplasmic side; sequence DNFRQSFRKVLCLRRGYGMEDADAIEPRPDKSGRPQATLPTRSCEANGLMQTSRI. The S-palmitoyl cysteine; by ZDHHC5 moiety is linked to residue Cys-320. The segment at 331–363 is disordered; that stretch reads DAIEPRPDKSGRPQATLPTRSCEANGLMQTSRI.

This sequence belongs to the G-protein coupled receptor 1 family. In terms of assembly, heterodimer with SSTR2. Heterodimerization with SSTR2 increases cell growth inhibition activity of SSTR2. Post-translationally, palmitoylated at Cys-320 by ZDHHC5, but not ZDHHC8. Palmitoylation creates an additional intracellular loop which is thought to be important for efficient coupling to G-proteins and may target the protein to lipid rafts. As to expression, prominent in the pituitary and small intestine. Low levels in islets and spleen. Not detected in kidney, pancreas, cerebellum, or cortex.

It is found in the cell membrane. In terms of biological role, receptor for somatostatin-28. The activity of this receptor is mediated by G proteins which inhibit adenylyl cyclase. Increases cell growth inhibition activity of SSTR2 following heterodimerization. The protein is Somatostatin receptor type 5 (Sstr5) of Rattus norvegicus (Rat).